A 290-amino-acid chain; its full sequence is HTH-type transcriptional activator RhaR (290 aa).

One can recognise an HTH araC/xylS-type domain in the interval 179-277 (DLIMSALQQS…GMTPRDYRQR (99 aa)). 2 consecutive DNA-binding regions (H-T-H motif) follow at residues 196–217 (ADFC…RQQT) and 244–267 (ISDI…TREA).

In terms of assembly, binds DNA as a dimer.

It is found in the cytoplasm. Its function is as follows. Activates expression of the rhaSR operon in response to L-rhamnose. The sequence is that of HTH-type transcriptional activator RhaR from Yersinia pestis bv. Antiqua (strain Antiqua).